We begin with the raw amino-acid sequence, 291 residues long: tRNA-cytidine(32) 2-sulfurtransferase (291 aa).

The PP-loop motif signature appears at 36 to 41; that stretch reads SGGKDS. Positions 111, 114, and 202 each coordinate [4Fe-4S] cluster. A disordered region spans residues 258-291; the sequence is RDPWLDAEDEEAEDCGEPPAGDGVVSLGGARGGR. Positions 262–273 are enriched in acidic residues; the sequence is LDAEDEEAEDCG.

This sequence belongs to the TtcA family. Homodimer. Mg(2+) serves as cofactor. It depends on [4Fe-4S] cluster as a cofactor.

The protein resides in the cytoplasm. The catalysed reaction is cytidine(32) in tRNA + S-sulfanyl-L-cysteinyl-[cysteine desulfurase] + AH2 + ATP = 2-thiocytidine(32) in tRNA + L-cysteinyl-[cysteine desulfurase] + A + AMP + diphosphate + H(+). It functions in the pathway tRNA modification. Catalyzes the ATP-dependent 2-thiolation of cytidine in position 32 of tRNA, to form 2-thiocytidine (s(2)C32). The sulfur atoms are provided by the cysteine/cysteine desulfurase (IscS) system. This is tRNA-cytidine(32) 2-sulfurtransferase from Anaeromyxobacter dehalogenans (strain 2CP-1 / ATCC BAA-258).